Here is a 317-residue protein sequence, read N- to C-terminus: NADPH-dependent D-xylose reductase (317 aa).

The active-site Proton donor is Y47. H109 is a binding site for substrate. Residues 164–165 (SN), 213–222 (SSFGPQSFVE), and 269–279 (KSNNPDRLLSN) contribute to the NADP(+) site.

It belongs to the aldo/keto reductase family.

The enzyme catalyses xylitol + NAD(+) = D-xylose + NADH + H(+). It catalyses the reaction xylitol + NADP(+) = D-xylose + NADPH + H(+). It functions in the pathway carbohydrate metabolism; D-xylose degradation. Its function is as follows. Reduces D-xylose into xylitol. Preferentially utilizes NADPH as a cosubstrate. The polypeptide is NADPH-dependent D-xylose reductase (XYL1) (Meyerozyma guilliermondii (strain ATCC 6260 / CBS 566 / DSM 6381 / JCM 1539 / NBRC 10279 / NRRL Y-324) (Yeast)).